Reading from the N-terminus, the 340-residue chain is Nicotianamine synthase 9 (340 aa).

Belongs to the nicotianamine synthase (NAS)-like family. Homotrimer.

It catalyses the reaction 3 S-adenosyl-L-methionine = nicotianamine + 3 S-methyl-5'-thioadenosine + 3 H(+). Its function is as follows. Synthesizes nicotianamine, a polyamine that is the first intermediate in the synthesis of the phytosiderophores of the mugineic acid type found in gramineae which serves as a sensor for the physiological iron status within the plant, and/or might be involved in the transport of iron. The chain is Nicotianamine synthase 9 (NAS9) from Hordeum vulgare (Barley).